Here is a 324-residue protein sequence, read N- to C-terminus: PGR5-like protein 1A, chloroplastic (324 aa).

A chloroplast-targeting transit peptide spans 1–60 (MGSKMLFSLTSPRLFSAVSRKPSSSFSPSPPSPSSRTQWTQLSPGKSISLRRRVFLLPAK). Residues 16 to 42 (SAVSRKPSSSFSPSPPSPSSRTQWTQL) form a disordered region. The Stromal segment spans residues 61–198 (ATTEQSGPVG…KVYSDLAVDY (138 aa)). Cysteines 82 and 183 form a disulfide. Residues 199–219 (FKMLLLNVPATVVALGLFFFL) traverse the membrane as a helical segment. Over 220–236 (DDITGFEITYIMELPEP) the chain is Lumenal, thylakoid. A helical transmembrane segment spans residues 237 to 257 (YSFIFTWFAAVPVIVYLALSI). Topologically, residues 258-324 (TKLIIKDFLI…LITLPEGSQA (67 aa)) are stromal.

This sequence belongs to the PGR5 family. In terms of assembly, homodimer and heterodimer with PGR5. Interacts with PGR5, FD2, petC, psaD1, LFNR1 and LFNR2. Also interacts with a Fe-containing cofactor (FCC). In terms of processing, disulfide bonds; Cys-300 and Cys-303 are probably involved in the formation of disulfide bridges with 'Cys-11' and 'Cys-105' of PGR5 while Cys-272 and Cys-275 are probably involved in the binding of a Fe-containing cofactor (FCC).

The protein resides in the plastid. It localises to the chloroplast thylakoid membrane. Inhibited by antimycin A. Its function is as follows. Ferredoxin-plastoquinone reductase involved in cyclic electron flow (CEF) around photosystem I. The homodimer is probably not involved in CEF. In Arabidopsis thaliana (Mouse-ear cress), this protein is PGR5-like protein 1A, chloroplastic (PGRL1A).